Consider the following 282-residue polypeptide: Hydroxyethylthiazole kinase 2 (282 aa).

M44 provides a ligand contact to substrate. Positions 120 and 179 each coordinate ATP. G206 serves as a coordination point for substrate.

It belongs to the Thz kinase family. Mg(2+) serves as cofactor.

It carries out the reaction 5-(2-hydroxyethyl)-4-methylthiazole + ATP = 4-methyl-5-(2-phosphooxyethyl)-thiazole + ADP + H(+). The protein operates within cofactor biosynthesis; thiamine diphosphate biosynthesis; 4-methyl-5-(2-phosphoethyl)-thiazole from 5-(2-hydroxyethyl)-4-methylthiazole: step 1/1. Functionally, catalyzes the phosphorylation of the hydroxyl group of 4-methyl-5-beta-hydroxyethylthiazole (THZ). The chain is Hydroxyethylthiazole kinase 2 from Methanosphaera stadtmanae (strain ATCC 43021 / DSM 3091 / JCM 11832 / MCB-3).